The primary structure comprises 101 residues: Large ribosomal subunit protein uL24 (101 aa).

It belongs to the universal ribosomal protein uL24 family. As to quaternary structure, part of the 50S ribosomal subunit.

Its function is as follows. One of two assembly initiator proteins, it binds directly to the 5'-end of the 23S rRNA, where it nucleates assembly of the 50S subunit. Functionally, one of the proteins that surrounds the polypeptide exit tunnel on the outside of the subunit. In Streptococcus sanguinis (strain SK36), this protein is Large ribosomal subunit protein uL24.